The sequence spans 230 residues: Orotidine 5'-phosphate decarboxylase (230 aa).

Substrate contacts are provided by residues Asp8, Lys30, 59–68, Thr118, Arg178, Gln187, Gly207, and Arg208; that span reads DLKLYDIPNT. Catalysis depends on Lys61, which acts as the Proton donor.

It belongs to the OMP decarboxylase family. Type 1 subfamily. As to quaternary structure, homodimer.

It catalyses the reaction orotidine 5'-phosphate + H(+) = UMP + CO2. Its pathway is pyrimidine metabolism; UMP biosynthesis via de novo pathway; UMP from orotate: step 2/2. Functionally, catalyzes the decarboxylation of orotidine 5'-monophosphate (OMP) to uridine 5'-monophosphate (UMP). In Sulfurovum sp. (strain NBC37-1), this protein is Orotidine 5'-phosphate decarboxylase.